The sequence spans 289 residues: tRNA pseudouridine synthase A (289 aa).

The active-site Nucleophile is D53. Y119 is a substrate binding site.

Belongs to the tRNA pseudouridine synthase TruA family. Homodimer.

The enzyme catalyses uridine(38/39/40) in tRNA = pseudouridine(38/39/40) in tRNA. Its function is as follows. Formation of pseudouridine at positions 38, 39 and 40 in the anticodon stem and loop of transfer RNAs. This is tRNA pseudouridine synthase A from Corynebacterium glutamicum (strain ATCC 13032 / DSM 20300 / JCM 1318 / BCRC 11384 / CCUG 27702 / LMG 3730 / NBRC 12168 / NCIMB 10025 / NRRL B-2784 / 534).